The following is a 187-amino-acid chain: Hypoxanthine/guanine phosphoribosyltransferase (187 aa).

This sequence belongs to the purine/pyrimidine phosphoribosyltransferase family. Archaeal HPRT subfamily. As to quaternary structure, homodimer.

It is found in the cytoplasm. It carries out the reaction IMP + diphosphate = hypoxanthine + 5-phospho-alpha-D-ribose 1-diphosphate. It catalyses the reaction GMP + diphosphate = guanine + 5-phospho-alpha-D-ribose 1-diphosphate. The protein operates within purine metabolism; IMP biosynthesis via salvage pathway; IMP from hypoxanthine: step 1/1. Its function is as follows. Catalyzes a salvage reaction resulting in the formation of IMP that is energically less costly than de novo synthesis. The chain is Hypoxanthine/guanine phosphoribosyltransferase from Methanocorpusculum labreanum (strain ATCC 43576 / DSM 4855 / Z).